The sequence spans 260 residues: Vesicle-associated membrane protein/synaptobrevin-binding protein (260 aa).

The Cytoplasmic portion of the chain corresponds to 1–238 (MASHEQALIL…SPAPAAAVRA (238 aa)). The MSP domain maps to 7-125 (ALILEPAGEL…MDTKLRCVFE (119 aa)). Residues 127-177 (PDGSHQAPASDASRATDAGAHFSESALEDPTVASRKTETQSPKRVGAVGSA) form a disordered region. The stretch at 172 to 216 (GAVGSAGEDVKKLQHELKKAQSEITSLKGENSQLKDEGIRLRKVA) forms a coiled coil. Residues 239-259 (FPPVVYVVAAIILGLIIGKFL) traverse the membrane as a helical; Anchor for type IV membrane protein segment.

It belongs to the VAMP-associated protein (VAP) (TC 9.B.17) family. As to expression, detected only in the central nervous system and the gill of aplysia.

The protein localises to the membrane. It localises to the synapse. Its subcellular location is the synaptosome. Functionally, required for neurotransmitter release. Interacts with VAMP. In Aplysia californica (California sea hare), this protein is Vesicle-associated membrane protein/synaptobrevin-binding protein.